A 344-amino-acid chain; its full sequence is Inositol 2-dehydrogenase/D-chiro-inositol 3-dehydrogenase (344 aa).

Belongs to the Gfo/Idh/MocA family. In terms of assembly, homotetramer.

It carries out the reaction myo-inositol + NAD(+) = scyllo-inosose + NADH + H(+). The catalysed reaction is 1D-chiro-inositol + NAD(+) = scyllo-inosine + NADH + H(+). It participates in polyol metabolism; myo-inositol degradation into acetyl-CoA; acetyl-CoA from myo-inositol: step 1/7. In terms of biological role, involved in the oxidation of myo-inositol (MI) and D-chiro-inositol (DCI) to 2-keto-myo-inositol (2KMI or 2-inosose) and 1-keto-D-chiro-inositol (1KDCI), respectively. The protein is Inositol 2-dehydrogenase/D-chiro-inositol 3-dehydrogenase of Bacillus velezensis (strain DSM 23117 / BGSC 10A6 / LMG 26770 / FZB42) (Bacillus amyloliquefaciens subsp. plantarum).